The following is a 123-amino-acid chain: Ribosome-binding factor A (123 aa).

Belongs to the RbfA family. As to quaternary structure, monomer. Binds 30S ribosomal subunits, but not 50S ribosomal subunits or 70S ribosomes.

Its subcellular location is the cytoplasm. One of several proteins that assist in the late maturation steps of the functional core of the 30S ribosomal subunit. Associates with free 30S ribosomal subunits (but not with 30S subunits that are part of 70S ribosomes or polysomes). Required for efficient processing of 16S rRNA. May interact with the 5'-terminal helix region of 16S rRNA. In Lactobacillus johnsonii (strain CNCM I-12250 / La1 / NCC 533), this protein is Ribosome-binding factor A.